A 268-amino-acid chain; its full sequence is Glucosamine-6-phosphate deaminase (268 aa).

Catalysis depends on Asp-72, which acts as the Proton acceptor; for enolization step. Catalysis depends on Asp-141, which acts as the For ring-opening step. The active-site Proton acceptor; for ring-opening step is the His-143. Glu-148 functions as the For ring-opening step in the catalytic mechanism.

Belongs to the glucosamine/galactosamine-6-phosphate isomerase family. NagB subfamily.

The catalysed reaction is alpha-D-glucosamine 6-phosphate + H2O = beta-D-fructose 6-phosphate + NH4(+). The protein operates within amino-sugar metabolism; N-acetylneuraminate degradation; D-fructose 6-phosphate from N-acetylneuraminate: step 5/5. With respect to regulation, allosterically activated by N-acetylglucosamine 6-phosphate (GlcNAc6P). In terms of biological role, catalyzes the reversible isomerization-deamination of glucosamine 6-phosphate (GlcN6P) to form fructose 6-phosphate (Fru6P) and ammonium ion. The protein is Glucosamine-6-phosphate deaminase of Borreliella afzelii (strain PKo) (Borrelia afzelii).